A 104-amino-acid chain; its full sequence is uncharacterized protein (104 aa).

A run of 2 helical transmembrane segments spans residues 26 to 46 (IGTGIIGVIGGILVVKGFTFF) and 70 to 90 (GLLGGIIGIATGFSITIIIAI).

It is found in the membrane. This is an uncharacterized protein from Acanthamoeba polyphaga mimivirus (APMV).